Here is a 134-residue protein sequence, read N- to C-terminus: Large ribosomal subunit protein uL22 (134 aa).

Belongs to the universal ribosomal protein uL22 family. Part of the 50S ribosomal subunit.

Its function is as follows. This protein binds specifically to 23S rRNA; its binding is stimulated by other ribosomal proteins, e.g. L4, L17, and L20. It is important during the early stages of 50S assembly. It makes multiple contacts with different domains of the 23S rRNA in the assembled 50S subunit and ribosome. In terms of biological role, the globular domain of the protein is located near the polypeptide exit tunnel on the outside of the subunit, while an extended beta-hairpin is found that lines the wall of the exit tunnel in the center of the 70S ribosome. The sequence is that of Large ribosomal subunit protein uL22 from Rhodococcus jostii (strain RHA1).